Consider the following 560-residue polypeptide: Protein DA1-related 7 (560 aa).

UIM domains lie at 43-62 (SEAD…QETS), 92-111 (EEDQ…KGKS), and 155-174 (NEDA…KGQI). In terms of domain architecture, LIM zinc-binding spans 199–269 (SICDGCKSAI…HVCKKKFPGR (71 aa)).

Interacts with ubiquitin.

Ubiquitin receptor that probably regulates developmental process. The protein is Protein DA1-related 7 (DAR7) of Arabidopsis thaliana (Mouse-ear cress).